Consider the following 227-residue polypeptide: Cytochrome c oxidase subunit 2 (227 aa).

At 1 to 14 (MAYPFQLGLQDATS) the chain is on the mitochondrial intermembrane side. A helical membrane pass occupies residues 15-45 (PIMEELLHFHDHTLMIVFLISSLVLYIISLM). Residues 46–59 (LTTKLTHTSTMDAQ) are Mitochondrial matrix-facing. Residues 60–87 (EVETVWTILPAIILILIALPSLRILYMM) form a helical membrane-spanning segment. Residues 88-227 (DEINNPSLTV…YFETWSALMV (140 aa)) lie on the Mitochondrial intermembrane side of the membrane. Residues His-161, Cys-196, Glu-198, Cys-200, His-204, and Met-207 each coordinate Cu cation. Glu-198 is a binding site for Mg(2+). Position 218 is a phosphotyrosine (Tyr-218).

This sequence belongs to the cytochrome c oxidase subunit 2 family. Component of the cytochrome c oxidase (complex IV, CIV), a multisubunit enzyme composed of 14 subunits. The complex is composed of a catalytic core of 3 subunits MT-CO1, MT-CO2 and MT-CO3, encoded in the mitochondrial DNA, and 11 supernumerary subunits COX4I, COX5A, COX5B, COX6A, COX6B, COX6C, COX7A, COX7B, COX7C, COX8 and NDUFA4, which are encoded in the nuclear genome. The complex exists as a monomer or a dimer and forms supercomplexes (SCs) in the inner mitochondrial membrane with NADH-ubiquinone oxidoreductase (complex I, CI) and ubiquinol-cytochrome c oxidoreductase (cytochrome b-c1 complex, complex III, CIII), resulting in different assemblies (supercomplex SCI(1)III(2)IV(1) and megacomplex MCI(2)III(2)IV(2)). Found in a complex with TMEM177, COA6, COX18, COX20, SCO1 and SCO2. Interacts with TMEM177 in a COX20-dependent manner. Interacts with COX20. Interacts with COX16. It depends on Cu cation as a cofactor.

It localises to the mitochondrion inner membrane. The catalysed reaction is 4 Fe(II)-[cytochrome c] + O2 + 8 H(+)(in) = 4 Fe(III)-[cytochrome c] + 2 H2O + 4 H(+)(out). In terms of biological role, component of the cytochrome c oxidase, the last enzyme in the mitochondrial electron transport chain which drives oxidative phosphorylation. The respiratory chain contains 3 multisubunit complexes succinate dehydrogenase (complex II, CII), ubiquinol-cytochrome c oxidoreductase (cytochrome b-c1 complex, complex III, CIII) and cytochrome c oxidase (complex IV, CIV), that cooperate to transfer electrons derived from NADH and succinate to molecular oxygen, creating an electrochemical gradient over the inner membrane that drives transmembrane transport and the ATP synthase. Cytochrome c oxidase is the component of the respiratory chain that catalyzes the reduction of oxygen to water. Electrons originating from reduced cytochrome c in the intermembrane space (IMS) are transferred via the dinuclear copper A center (CU(A)) of subunit 2 and heme A of subunit 1 to the active site in subunit 1, a binuclear center (BNC) formed by heme A3 and copper B (CU(B)). The BNC reduces molecular oxygen to 2 water molecules using 4 electrons from cytochrome c in the IMS and 4 protons from the mitochondrial matrix. The chain is Cytochrome c oxidase subunit 2 (MT-CO2) from Canis lupus familiaris (Dog).